Consider the following 160-residue polypeptide: Endoribonuclease YbeY (160 aa).

Zn(2+) contacts are provided by His123, His127, and His133.

The protein belongs to the endoribonuclease YbeY family. The cofactor is Zn(2+).

It localises to the cytoplasm. In terms of biological role, single strand-specific metallo-endoribonuclease involved in late-stage 70S ribosome quality control and in maturation of the 3' terminus of the 16S rRNA. This is Endoribonuclease YbeY from Shouchella clausii (strain KSM-K16) (Alkalihalobacillus clausii).